The chain runs to 158 residues: MFGISFSELLLVGLVALLVLGPERLPGAARTAGLWIGRLKRSFNAIKQEVEREIGADEIRRQLHNEHILSMEDEARKMFAPNQPSENSPEPANPPPAPAAAEAASPVHNQAAHHEIGPAQPAAPKTELSLEKTAKPADAGTPVPAPPAHDSSLPPRAP.

A helical membrane pass occupies residues 1–21 (MFGISFSELLLVGLVALLVLG). Residues 73–158 (DEARKMFAPN…HDSSLPPRAP (86 aa)) form a disordered region. The span at 80–90 (APNQPSENSPE) shows a compositional bias: low complexity.

It belongs to the TatB family. As to quaternary structure, the Tat system comprises two distinct complexes: a TatABC complex, containing multiple copies of TatA, TatB and TatC subunits, and a separate TatA complex, containing only TatA subunits. Substrates initially bind to the TatABC complex, which probably triggers association of the separate TatA complex to form the active translocon.

It is found in the cell inner membrane. In terms of biological role, part of the twin-arginine translocation (Tat) system that transports large folded proteins containing a characteristic twin-arginine motif in their signal peptide across membranes. Together with TatC, TatB is part of a receptor directly interacting with Tat signal peptides. TatB may form an oligomeric binding site that transiently accommodates folded Tat precursor proteins before their translocation. This chain is Sec-independent protein translocase protein TatB, found in Pseudomonas syringae pv. syringae (strain B728a).